The primary structure comprises 618 residues: Protein polyglycylase TTLL10 (618 aa).

Residues 1-76 (MGSSQEEGLP…GLLLGDGKPS (76 aa)) are disordered. Positions 57 to 74 (ATGPPAALLEGLLLGDGK) are enriched in low complexity. A TTL domain is found at 82 to 479 (PGPFFYIGGN…TFQKSLRGQK (398 aa)). Residues K240, 246-247 (QG), 289-292 (QRYI), 302-304 (KFD), and 345-346 (TN) each bind ATP. Q246 contributes to the a protein binding site. The Mg(2+) site is built by D425, E438, and N440. Positions 503–618 (LGGSCSLRRR…PATLPAFRDL (116 aa)) are disordered. Positions 539–557 (PVPPPLAPQRPQLPGPSPD) are enriched in pro residues. The segment covering 585–594 (AKEEREEPEN) has biased composition (basic and acidic residues).

Mg(2+) serves as cofactor.

It localises to the cytoplasm. Its subcellular location is the cytoskeleton. The protein resides in the cell projection. It is found in the cilium. The protein localises to the cilium axoneme. The catalysed reaction is (glycyl)(n)-glycyl-L-glutamyl-[protein] + glycine + ATP = (glycyl)(n+1)-glycyl-L-glutamyl-[protein] + ADP + phosphate + H(+). In terms of biological role, polyglycylase which modifies both tubulin and non-tubulin proteins, generating polyglycine side chains of variable lengths on the gamma-carboxyl groups of specific glutamate residues of target proteins. Involved in the elongation step rather than the initiation step of the polyglycylation reaction. Polyglycylates alpha-tubulin and beta-tubulin. Polyglycylates non-tubulin proteins such as nucleosome assembly protein NAP1. The protein is Protein polyglycylase TTLL10 (TTLL10) of Macaca fascicularis (Crab-eating macaque).